Reading from the N-terminus, the 325-residue chain is DNA-directed RNA polymerase subunit alpha (325 aa).

The interval 1-231 (MQTSLLKPKI…DQLSVFAALE (231 aa)) is alpha N-terminal domain (alpha-NTD). An alpha C-terminal domain (alpha-CTD) region spans residues 246–325 (IDPILLRPVD…ENWPPAGLDK (80 aa)).

This sequence belongs to the RNA polymerase alpha chain family. As to quaternary structure, homodimer. The RNAP catalytic core consists of 2 alpha, 1 beta, 1 beta' and 1 omega subunit. When a sigma factor is associated with the core the holoenzyme is formed, which can initiate transcription.

The enzyme catalyses RNA(n) + a ribonucleoside 5'-triphosphate = RNA(n+1) + diphosphate. DNA-dependent RNA polymerase catalyzes the transcription of DNA into RNA using the four ribonucleoside triphosphates as substrates. The chain is DNA-directed RNA polymerase subunit alpha from Burkholderia orbicola (strain MC0-3).